The sequence spans 131 residues: Global transcriptional regulator Spx (131 aa).

The CXXC motif lies at 10–13; sequence CTSC. Cys10 and Cys13 are oxidised to a cystine.

The protein belongs to the ArsC family. Spx subfamily. As to quaternary structure, interacts with the C-terminal domain of the alpha subunit of the RNAP. A single Spx monomer interacts with RNAP to form the transcription activation complex. Interacts with the adapter protein SpxH/YjbH.

It is found in the cytoplasm. With respect to regulation, under non-stress conditions, Spx is degraded by ClpXP and, to a lesser extent, by ClpCP. Efficient dedradation by ClpXP requires the adapter protein SpxH/YjbH. Binding to SpxH/YjbH reduces the overall conformational flexibility of Spx and stabilizes the C-terminal ClpX recognition region of Spx. In addition, activity is modulated by the formation of a disulfide bound within the N-terminal Cys-X-X-Cys (CXXC) motif, which is required for the transcriptional activation of trxA and trxB, or for the activation of msrAB operon expression following paraquat oxidative stress. However, it seems that formation of the disulfide bound is not essential for induction of all Spx-controlled genes, as for example the case of BSH biosynthesis genes. Similarly, induction of the Spx regulon during cell wall stress is not accompanied by oxidation of the disulfide switch, but requires Spx stabilization by the anti-adapter protein SpxO/YirB. Its function is as follows. Global transcriptional regulator that plays a key role in stress response and exerts either positive or negative regulation of genes. Acts by interacting with the C-terminal domain of the alpha subunit of the RNA polymerase (RNAP). This interaction can enhance binding of RNAP to the promoter region of target genes and stimulate their transcription, or block interaction of RNAP with activator proteins and repress transcription. Exhibits no DNA-binding activity. In terms of biological role, induces the expression of a large number of genes in response to a variety of stress conditions, such as disulfide, heat and cell wall stress, while concurrently repressing transcription of genes involved in various developmental and growth-related pathways during periods of extreme stress. Functions in the oxidative stress response via induction of the transcription of thioredoxin (trxA) and thioredoxin reductase (trxB) during thiol-specific oxidative (disulfide) stress. Mediates response to oxidative stress caused by paraquat (PQ) via induction of the methionine sulfoxide reductase genes, msrA and msrB. Also acts as a transcriptional activator of the bacillithiol (BSH) biosynthesis genes in response to oxidizing conditions and thio-reactive compounds. Involved in heat stress response and thermotolerance development, which results in diminished cellular protein aggregates. Plays an important adaptive role in the cell wall stress response. Participates in sulfate-dependent control of organosulfur metabolism. Negatively controls, via CymR, the expression of the organosulfur utilization operons ytmI, yxeI and ssu, and directly activates yrrT operon expression during growth in medium containing methionine as sole sulfur source. Negatively affects competence and sporulation. Inhibits biofilm formation in response to disulfide stress by repressing biofilm matrix genes. In Bacillus subtilis (strain 168), this protein is Global transcriptional regulator Spx.